The sequence spans 49 residues: Small, acid-soluble spore protein O (49 aa).

Residues Met1–Gln49 form a disordered region. A compositionally biased stretch (polar residues) spans His8 to Gly20.

It belongs to the SspO family.

The protein resides in the spore core. This is Small, acid-soluble spore protein O from Bacillus anthracis (strain A0248).